A 2604-amino-acid polypeptide reads, in one-letter code: BEACH domain-containing protein B (2604 aa).

Positions 1761 to 1912 constitute a BEACH-type PH domain; sequence VGTSEVLTSV…NAKEVGMLIV (152 aa). The region spanning 1936 to 2226 is the BEACH domain; sequence DRRIAMEMAE…QIFRKKHPRR (291 aa). WD repeat units lie at residues 2254-2293, 2368-2407, 2433-2474, 2476-2515, 2516-2557, and 2558-2596; these read HSPSAVLYVGVVDSNIVLVNQGLTLSVKIWLTTQLHSGGN, HHKDVVSCVAVTADSTILATGSYDTTVMVWDILRMRTPEK, GHDD…RSLK, PSGSAVSKLAASHHGRIVLYGDDDLSLHLYSINGKHLASS, ESNG…KRYN, and GAGKIITSLTVTQEECFLAGTKDGALLVYSIENPQHRKP.

May be involved in the suppression of BCHC1 activity. This Arabidopsis thaliana (Mouse-ear cress) protein is BEACH domain-containing protein B.